The chain runs to 468 residues: DNA polymerase IV 1 (468 aa).

Positions 6–188 constitute a UmuC domain; it reads VLHLDMDAFF…LPVRRLWGIG (183 aa). The Mg(2+) site is built by aspartate 10 and aspartate 105. Glutamate 106 is a catalytic residue.

It belongs to the DNA polymerase type-Y family. Monomer. It depends on Mg(2+) as a cofactor.

Its subcellular location is the cytoplasm. The enzyme catalyses DNA(n) + a 2'-deoxyribonucleoside 5'-triphosphate = DNA(n+1) + diphosphate. In terms of biological role, poorly processive, error-prone DNA polymerase involved in untargeted mutagenesis. Copies undamaged DNA at stalled replication forks, which arise in vivo from mismatched or misaligned primer ends. These misaligned primers can be extended by PolIV. Exhibits no 3'-5' exonuclease (proofreading) activity. May be involved in translesional synthesis, in conjunction with the beta clamp from PolIII. The sequence is that of DNA polymerase IV 1 (dinB1) from Mycobacterium tuberculosis (strain CDC 1551 / Oshkosh).